A 1152-amino-acid chain; its full sequence is Autotransporter adhesin BpaC (1152 aa).

Residues methionine 1–asparagine 71 form the signal peptide. The interval asparagine 72 to glycine 1061 is surface exposed passenger domain. Disordered stretches follow at residues glycine 420–threonine 886 and threonine 900–alanine 949. Residues alanine 427–aspartate 442 are compositionally biased toward polar residues. The span at asparagine 443–glycine 504 shows a compositional bias: low complexity. Polar residues predominate over residues aspartate 505 to glutamate 519. A compositionally biased stretch (low complexity) spans asparagine 520–glycine 588. Residues aspartate 589–glutamate 603 show a composition bias toward polar residues. Over residues asparagine 604–glycine 630 the composition is skewed to low complexity. The segment covering aspartate 631–glutamate 645 has biased composition (polar residues). A compositionally biased stretch (low complexity) spans asparagine 646–glycine 672. The segment covering aspartate 673–glutamate 687 has biased composition (polar residues). A compositionally biased stretch (low complexity) spans asparagine 688–glycine 714. Polar residues predominate over residues aspartate 715 to glutamate 729. Residues asparagine 730 to glycine 756 show a composition bias toward low complexity. Positions aspartate 757–glutamate 771 are enriched in polar residues. Low complexity-rich tracts occupy residues asparagine 772 to glycine 840 and threonine 848 to threonine 886. An outer membrane translocation of the passenger domain region spans residues isoleucine 1062–glycine 1099. Positions lysine 1100–tryptophan 1152 are translocator domain.

This sequence belongs to the autotransporter-2 (AT-2) (TC 1.B.40) family. Homotrimer.

It is found in the cell surface. The protein resides in the cell outer membrane. Involved in virulence. Mediates adherence to human respiratory epithelial cells. This is Autotransporter adhesin BpaC from Burkholderia pseudomallei (strain 1026b).